Reading from the N-terminus, the 655-residue chain is p-hydroxybenzoic acid efflux pump subunit AaeB (655 aa).

10 helical membrane passes run 13–33 (FAVK…HFQL), 38–58 (WAVL…GGEP), 69–89 (LRII…IAMI), 93–113 (LLMI…SSLV), 121–141 (WGLA…EPLL), 152–172 (EIVV…PRSI), 370–390 (LFWL…IAVV), 407–427 (FIYG…VIIP), 431–451 (QSML…GIEV), and 481–501 (LFLD…TVIL).

It belongs to the aromatic acid exporter ArAE (TC 2.A.85) family.

It localises to the cell inner membrane. Forms an efflux pump with AaeA. Could function as a metabolic relief valve, allowing to eliminate certain compounds when they accumulate to high levels in the cell. The sequence is that of p-hydroxybenzoic acid efflux pump subunit AaeB from Escherichia fergusonii (strain ATCC 35469 / DSM 13698 / CCUG 18766 / IAM 14443 / JCM 21226 / LMG 7866 / NBRC 102419 / NCTC 12128 / CDC 0568-73).